The following is a 232-amino-acid chain: 5'-methylthioadenosine/S-adenosylhomocysteine nucleosidase (232 aa).

The active-site Proton acceptor is the Glu-12. Substrate is bound by residues Gly-78, Ile-152, and 173–174 (ME). Asp-197 (proton donor) is an active-site residue.

This sequence belongs to the PNP/UDP phosphorylase family. MtnN subfamily. As to quaternary structure, homodimer.

The enzyme catalyses S-adenosyl-L-homocysteine + H2O = S-(5-deoxy-D-ribos-5-yl)-L-homocysteine + adenine. It catalyses the reaction S-methyl-5'-thioadenosine + H2O = 5-(methylsulfanyl)-D-ribose + adenine. It carries out the reaction 5'-deoxyadenosine + H2O = 5-deoxy-D-ribose + adenine. Its pathway is amino-acid biosynthesis; L-methionine biosynthesis via salvage pathway; S-methyl-5-thio-alpha-D-ribose 1-phosphate from S-methyl-5'-thioadenosine (hydrolase route): step 1/2. In terms of biological role, catalyzes the irreversible cleavage of the glycosidic bond in both 5'-methylthioadenosine (MTA) and S-adenosylhomocysteine (SAH/AdoHcy) to adenine and the corresponding thioribose, 5'-methylthioribose and S-ribosylhomocysteine, respectively. Also cleaves 5'-deoxyadenosine, a toxic by-product of radical S-adenosylmethionine (SAM) enzymes, into 5-deoxyribose and adenine. Thus, is required for in vivo function of the radical SAM enzymes biotin synthase and lipoic acid synthase, that are inhibited by 5'-deoxyadenosine accumulation. The polypeptide is 5'-methylthioadenosine/S-adenosylhomocysteine nucleosidase (Klebsiella pneumoniae subsp. pneumoniae (strain ATCC 700721 / MGH 78578)).